The primary structure comprises 687 residues: Phenylalanine aminomutase (L-beta-phenylalanine forming) (687 aa).

Residue tyrosine 80 is the Proton donor/acceptor of the active site. The 5-imidazolinone (Ala-Gly) cross-link spans 175–177; the sequence is ASG. Serine 176 carries the 2,3-didehydroalanine (Ser) modification. Residues asparagine 231, glutamine 319, arginine 325, asparagine 355, lysine 427, glutamate 455, and asparagine 458 each contribute to the (E)-cinnamate site.

It belongs to the PAL/histidase family. As to quaternary structure, homodimer. Homotetramer, dimer of dimers. In terms of processing, contains an active site 4-methylidene-imidazol-5-one (MIO), which is formed autocatalytically by cyclization and dehydration of residues Ala-Ser-Gly.

The protein resides in the cytoplasm. It carries out the reaction L-phenylalanine = L-beta-phenylalanine. The catalysed reaction is L-phenylalanine = (E)-cinnamate + NH4(+). It functions in the pathway alkaloid biosynthesis; taxol biosynthesis. The protein operates within phenylpropanoid metabolism; trans-cinnamate biosynthesis; trans-cinnamate from L-phenylalanine: step 1/1. Functionally, phenylalanine aminomutase that catalyzes the rearrangement of L-phenylalanine to R-beta-phenylalanine. Catalyzes the first committed step in the biosynthesis of the side chain of the alkaloid taxol (paclitaxel), a widely-used compound with antitumor activity. Also has low phenylalanine ammonia-lyase activity and can catalyze the amination of trans-cinnamate. This Taxus chinensis (Chinese yew) protein is Phenylalanine aminomutase (L-beta-phenylalanine forming) (pam).